A 690-amino-acid polypeptide reads, in one-letter code: MFCTKLKDLKITGECPLSLLAPGQVPKEPGEEVAGTSESGKATLPICQDVPEKNVQRSLPQRKTSRSRVYLHTLAESICKLIFPELERLNLALQRTLAKHKIKESRKSLEREDLEKIITDQAIAAGVPVEIVKESLGEELFKICYEEDEHILGVVGGTLKDFLNSFSTLLKQSSHCQEAEKRGRFEDASILCLDKDHDFLNVYYFFPKRITSLILPGIIKAAAHILYETEVEVSLLPPCFRNDCSEFVNQPYLLYSLHVKSTKPSLSPGKPQSSLVIPASLFCKTFPFHFMFDKDMTILQFGNGIRRLMNRRDFQGKPHFEEYFEVLTPKINQTFSGIMTMLNMQFVVRVRRWDNSVKKSSRVMDLKGQMIYIVESSAILFLGSPCVDRLEDFTGRGLYLSDIPIHNALRDVVLIGEQARAQDGLKKRLGKLKATLEQAHQALEEEKKKTVDLLCSIFPSEVAQQLWQGQVVQAKKFSNVTMLFSDIVGFTAICSQCSPLQVITMLNALYTRFDQQCGELDVYKVETIGDAYCVAGGLHKESDTHAAQIALMALKMMELSDEVMSPHGEPIKMRIGLHSGSVFAGVVGVKMPRYCLFGNNVTLANKFESCSIPRKINVSPTTYRLLKDCPGFVFTPRSREELPPNFPSEIPGICHFLEAYEPATNSKPWFQKKDVEDGNANFLGKASGID.

Ser-267 carries the phosphoserine modification. One can recognise a Guanylate cyclase domain in the interval 481 to 608; that stretch reads TMLFSDIVGF…NNVTLANKFE (128 aa).

This sequence belongs to the adenylyl cyclase class-4/guanylyl cyclase family. In terms of assembly, the active enzyme is formed by a heterodimer of an alpha and a beta subunit. Heterodimer with GUCY1B1. Requires Mg(2+) as cofactor. Mn(2+) serves as cofactor.

The protein localises to the cytoplasm. The catalysed reaction is GTP = 3',5'-cyclic GMP + diphosphate. Activated by nitric oxide in the presence of magnesium or manganese ions. This chain is Guanylate cyclase soluble subunit alpha-1 (GUCY1A1), found in Canis lupus familiaris (Dog).